The sequence spans 171 residues: Shikimate kinase (171 aa).

14–19 (GAGKST) provides a ligand contact to ATP. S18 contacts Mg(2+). 3 residues coordinate substrate: D36, R60, and G82. Position 120 (R120) interacts with ATP. R139 contributes to the substrate binding site. Q156 is an ATP binding site.

The protein belongs to the shikimate kinase family. Monomer. Mg(2+) serves as cofactor.

The protein resides in the cytoplasm. It carries out the reaction shikimate + ATP = 3-phosphoshikimate + ADP + H(+). It participates in metabolic intermediate biosynthesis; chorismate biosynthesis; chorismate from D-erythrose 4-phosphate and phosphoenolpyruvate: step 5/7. Catalyzes the specific phosphorylation of the 3-hydroxyl group of shikimic acid using ATP as a cosubstrate. This Shewanella sp. (strain MR-4) protein is Shikimate kinase.